A 122-amino-acid chain; its full sequence is Large ribosomal subunit protein uL14 (122 aa).

Belongs to the universal ribosomal protein uL14 family. Part of the 50S ribosomal subunit. Forms a cluster with proteins L3 and L19. In the 70S ribosome, L14 and L19 interact and together make contacts with the 16S rRNA in bridges B5 and B8.

In terms of biological role, binds to 23S rRNA. Forms part of two intersubunit bridges in the 70S ribosome. This is Large ribosomal subunit protein uL14 from Mesomycoplasma hyopneumoniae (strain 232) (Mycoplasma hyopneumoniae).